The primary structure comprises 416 residues: Phosphoglycerate kinase (416 aa).

Valine 22, aspartate 23, phenylalanine 24, asparagine 25, glutamine 37, arginine 38, serine 61, histidine 62, glycine 64, arginine 65, leucine 120, arginine 121, histidine 168, and arginine 169 together coordinate (2R)-3-phosphoglycerate. Glycine 212 serves as a coordination point for ADP. Residue glycine 212 coordinates CDP. AMP is bound by residues alanine 213 and lysine 214. An ATP-binding site is contributed by alanine 213. Residue alanine 213 coordinates Mg(2+). Aspartate 217 provides a ligand contact to CDP. Position 217 (aspartate 217) interacts with Mg(2+). Residue lysine 218 participates in AMP binding. Residue lysine 218 coordinates ATP. Glycine 236 contacts ADP. Residue glycine 236 coordinates CDP. Glycine 237 and glycine 311 together coordinate AMP. Residues glycine 237 and glycine 311 each coordinate ATP. CDP contacts are provided by glycine 336 and phenylalanine 341. Phenylalanine 341 is a binding site for ADP. Glutamate 342 provides a ligand contact to AMP. Residues glutamate 342, aspartate 373, and threonine 374 each contribute to the ATP site. Residue aspartate 373 coordinates Mg(2+).

It belongs to the phosphoglycerate kinase family. In terms of assembly, monomer. The cofactor is Mg(2+). Expressed in all cells of the worm (at protein level), higher expression in the cells associated with the tubercles (tegumental modifications), the muscle and along the tegument.

The enzyme catalyses (2R)-3-phosphoglycerate + ATP = (2R)-3-phospho-glyceroyl phosphate + ADP. It functions in the pathway carbohydrate degradation; glycolysis; pyruvate from D-glyceraldehyde 3-phosphate: step 2/5. Its function is as follows. Involved in the seventh step in glycolysis. Catalyzes the conversion of 1,3-bisphosphoglycerate ((2R)-3-phospho-glyceroyl phosphate) to 3-phosphoglycerate ((2R)-3-phosphoglycerate) and results in the formation of ATP. Associated with the tegument to provide the energy needed for the tegumental repair resulting from immune damage. The protein is Phosphoglycerate kinase (PGK) of Schistosoma mansoni (Blood fluke).